Reading from the N-terminus, the 237-residue chain is CD63 antigen (237 aa).

Residues 1 to 11 (MAVEGGMKCVK) lie on the Cytoplasmic side of the membrane. A helical membrane pass occupies residues 12–32 (FLLYVLLLVFCACAVGLIAVG). Residues 33-51 (VGTHLVLNQTITHGATPSF) lie on the Extracellular side of the membrane. N40 carries N-linked (GlcNAc...) asparagine glycosylation. A helical membrane pass occupies residues 52–72 (LLPVVIIAVGAFLFLVAFVGC). At 73 to 81 (CGACKENYC) the chain is on the cytoplasmic side. Residues 82–102 (LMITFAIFLSLIMLVEVAAAI) form a helical membrane-spanning segment. Residues 103–202 (AGYVFRDKVR…KIAAWLRKNV (100 aa)) lie on the Extracellular side of the membrane. Residues N130, N150, and N171 are each glycosylated (N-linked (GlcNAc...) asparagine). Residues 203–223 (LVVAAAALGIAFVEILGIVLA) traverse the membrane as a helical segment. At 224-237 (CCLVKSIRSGYEVM) the chain is on the cytoplasmic side. The Lysosomal targeting motif signature appears at 233–237 (GYEVM).

The protein belongs to the tetraspanin (TM4SF) family. Interacts with TIMP1 and ITGB1 and recruits TIMP1 to ITGB1. Interacts with CD9. Identified in a complex with CD9 and ITGB3. Interacts with PMEL. Interacts with KDR/VEGFR2; identified in a complex with ITGB1 and KDR/VEGFR2 and is required to recruit KDR to ITGB1 complexes. Interacts with SYT7. In terms of processing, palmitoylated at a low, basal level in unstimulated platelets. The level of palmitoylation increases when platelets are activated by thrombin (in vitro).

It localises to the cell membrane. It is found in the lysosome membrane. The protein resides in the late endosome membrane. The protein localises to the endosome. Its subcellular location is the multivesicular body. It localises to the melanosome. It is found in the secreted. The protein resides in the extracellular exosome. The protein localises to the cell surface. In terms of biological role, functions as a cell surface receptor for TIMP1 and plays a role in the activation of cellular signaling cascades. Plays a role in the activation of ITGB1 and integrin signaling, leading to the activation of AKT, FAK/PTK2 and MAP kinases. Promotes cell survival, reorganization of the actin cytoskeleton, cell adhesion, spreading and migration, via its role in the activation of AKT and FAK/PTK2. Plays a role in VEGFA signaling via its role in regulating the internalization of KDR/VEGFR2. Plays a role in intracellular vesicular transport processes, and is required for normal trafficking of the PMEL luminal domain that is essential for the development and maturation of melanocytes. Plays a role in the adhesion of leukocytes onto endothelial cells via its role in the regulation of SELP trafficking. May play a role in mast cell degranulation in response to Ms4a2/FceRI stimulation, but not in mast cell degranulation in response to other stimuli. The chain is CD63 antigen (CD63) from Bos taurus (Bovine).